A 72-amino-acid polypeptide reads, in one-letter code: Translation initiation factor IF-1 (72 aa).

The region spanning 1-72 (MAKEEAIEVE…TRGRITYREK (72 aa)) is the S1-like domain.

Belongs to the IF-1 family. Component of the 30S ribosomal translation pre-initiation complex which assembles on the 30S ribosome in the order IF-2 and IF-3, IF-1 and N-formylmethionyl-tRNA(fMet); mRNA recruitment can occur at any time during PIC assembly.

Its subcellular location is the cytoplasm. Its function is as follows. One of the essential components for the initiation of protein synthesis. Stabilizes the binding of IF-2 and IF-3 on the 30S subunit to which N-formylmethionyl-tRNA(fMet) subsequently binds. Helps modulate mRNA selection, yielding the 30S pre-initiation complex (PIC). Upon addition of the 50S ribosomal subunit IF-1, IF-2 and IF-3 are released leaving the mature 70S translation initiation complex. This Syntrophotalea carbinolica (strain DSM 2380 / NBRC 103641 / GraBd1) (Pelobacter carbinolicus) protein is Translation initiation factor IF-1.